The following is a 199-amino-acid chain: GTP cyclohydrolase 1 (199 aa).

Residues C89, H92, and C161 each contribute to the Zn(2+) site.

The protein belongs to the GTP cyclohydrolase I family. As to quaternary structure, homomer.

It catalyses the reaction GTP + H2O = 7,8-dihydroneopterin 3'-triphosphate + formate + H(+). The protein operates within cofactor biosynthesis; 7,8-dihydroneopterin triphosphate biosynthesis; 7,8-dihydroneopterin triphosphate from GTP: step 1/1. The chain is GTP cyclohydrolase 1 from Bifidobacterium longum (strain DJO10A).